The sequence spans 92 residues: Large ribosomal subunit protein bL27 (92 aa).

Positions 1–22 are disordered; the sequence is MAHTKAGGSTRNGRDSRGQRLG.

Belongs to the bacterial ribosomal protein bL27 family.

The polypeptide is Large ribosomal subunit protein bL27 (Mycoplasmopsis agalactiae (strain NCTC 10123 / CIP 59.7 / PG2) (Mycoplasma agalactiae)).